The sequence spans 438 residues: Transcriptional enhancer factor TEF-3 (438 aa).

Over residues Met-1 to Gly-18 the composition is skewed to polar residues. Disordered regions lie at residues Met-1–Ser-36 and Gln-195–Ala-217. The segment at residues Asp-28 to Glu-104 is a DNA-binding region (TEA). The span at Ser-205 to Pro-216 shows a compositional bias: low complexity.

In terms of tissue distribution, enriched in cardiac and skeletal muscle.

The protein localises to the nucleus. In terms of biological role, transcription factor which plays a key role in the Hippo signaling pathway, a pathway involved in organ size control and tumor suppression by restricting proliferation and promoting apoptosis. The core of this pathway is composed of a kinase cascade wherein MST1/MST2, in complex with its regulatory protein SAV1, phosphorylates and activates LATS1/2 in complex with its regulatory protein MOB1, which in turn phosphorylates and inactivates YAP1 oncoprotein and WWTR1/TAZ. Binds m-cat elements from muscle-specific promoters and differentially activate transcription. Its function is as follows. Isoform B has probably a transactivation capacity that is lacking in the other isoforms. Isoform D may be defective in DNA binding. This Gallus gallus (Chicken) protein is Transcriptional enhancer factor TEF-3 (TEAD4).